Reading from the N-terminus, the 243-residue chain is MPVYRDEGVVLRTAPLAEADRIITVLTRRTGRVRAVAKGVRKTSSRFGSRLEPGTYVDLLLHSGRALDTVTQADIISPYGATIAVDYPRYTAAAVMLETAERLTSEERQPALRLFLLLVGGLRTLAGDERPPALVLDAFLLRALAVSGYGMALDHCARCGGPGLHLSLSVPGGGVVCPQCRPHGAASVSAGAVRLLADLLRGDWDGALVSDARARREAGGIAAAYLQWHLERGLRALPYLERA.

It belongs to the RecO family.

Functionally, involved in DNA repair and RecF pathway recombination. In Frankia casuarinae (strain DSM 45818 / CECT 9043 / HFP020203 / CcI3), this protein is DNA repair protein RecO.